Consider the following 828-residue polypeptide: Periplasmic nitrate reductase (828 aa).

The segment at residues 1 to 33 (MKLSRRDFMKANAAVAAAAAAGLTIPTVVQAAA) is a signal peptide (tat-type signal). In terms of domain architecture, 4Fe-4S Mo/W bis-MGD-type spans 39-95 (IKWDKAPCRFCGTGCGVLVGTQNGRIVASQGDPEAAVNRGLSCIKGYFLPKIMYGKD). Residues cysteine 46, cysteine 49, cysteine 53, and cysteine 81 each contribute to the [4Fe-4S] cluster site. Mo-bis(molybdopterin guanine dinucleotide)-binding positions include lysine 83, glutamine 150, asparagine 175, cysteine 179, 212-219 (WGSNMAEM), 243-247 (STFEH), 262-264 (QTD), methionine 372, glutamine 376, asparagine 482, 508-509 (SD), lysine 531, aspartate 558, and 718-727 (TGRVLEHWHT). Residue phenylalanine 794 participates in substrate binding. Mo-bis(molybdopterin guanine dinucleotide) is bound by residues asparagine 802 and lysine 819.

It belongs to the prokaryotic molybdopterin-containing oxidoreductase family. NasA/NapA/NarB subfamily. In terms of assembly, component of the periplasmic nitrate reductase NapAB complex composed of NapA and NapB. [4Fe-4S] cluster is required as a cofactor. Mo-bis(molybdopterin guanine dinucleotide) serves as cofactor. Predicted to be exported by the Tat system. The position of the signal peptide cleavage has not been experimentally proven.

The protein resides in the periplasm. The enzyme catalyses 2 Fe(II)-[cytochrome] + nitrate + 2 H(+) = 2 Fe(III)-[cytochrome] + nitrite + H2O. In terms of biological role, catalytic subunit of the periplasmic nitrate reductase complex NapAB. Receives electrons from NapB and catalyzes the reduction of nitrate to nitrite. This Serratia proteamaculans (strain 568) protein is Periplasmic nitrate reductase.